Consider the following 1256-residue polypeptide: Cohesin subunit SA-3 (1256 aa).

Over residues 1–22 the composition is skewed to low complexity; sequence MPTLWSPSTQHHGSSSGSMSSP. Residues 1 to 110 form a disordered region; that stretch reads MPTLWSPSTQ…GGNDKNKSVP (110 aa). Basic residues predominate over residues 72 to 83; it reads RNVRKRAAKRPP. An SCD domain is found at 324–409; that stretch reads FVHRYRDILP…NRFKDRMVSM (86 aa). Disordered stretches follow at residues 1096-1169 and 1230-1256; these read RRLQ…GPEL and KLLHSPSSPSEHGLDLLDTTELNMEDF. Residues 1113 to 1125 are compositionally biased toward polar residues; sequence NSGPTTPTLTSTA. The span at 1126-1140 shows a compositional bias: basic residues; sequence VKRRQSPRTVGKRQK. Over residues 1144–1166 the composition is skewed to pro residues; that stretch reads GPGPGPGPGPGPGPGPGPGPGPG. Serine 1234 carries the post-translational modification Phosphoserine.

It belongs to the SCC3 family. As to quaternary structure, component of the meiosis-specific cohesin complex, which also contains the SMC1 (SMC1A or SMC1B) and SMC3 heterodimer. Such complex likely contains RAD21, or the meiosis-specific related protein REC8. Interacts with CCDC79/TERB1; recruiting cohesin to telomeres to develop structural rigidity. Phosphorylated. As to expression, testis specific.

The protein resides in the nucleus. The protein localises to the chromosome. Its function is as follows. Meiosis specific component of cohesin complex. The cohesin complex is required for the cohesion of sister chromatids after DNA replication. The cohesin complex apparently forms a large proteinaceous ring within which sister chromatids can be trapped. At anaphase, the complex is cleaved and dissociates from chromatin, allowing sister chromatids to segregate. The meiosis-specific cohesin complex probably replaces mitosis specific cohesin complex when it dissociates from chromatin during prophase I. This Rattus norvegicus (Rat) protein is Cohesin subunit SA-3 (Stag3).